The following is a 315-amino-acid chain: Ribosomal RNA small subunit methyltransferase H (315 aa).

Residues 1 to 21 (MNVVNVVPMHLPPPPPRPRGE) form a disordered region. Residues 51–53 (GGH), aspartate 69, phenylalanine 96, aspartate 117, and glutamine 124 each bind S-adenosyl-L-methionine. The disordered stretch occupies residues 281-315 (KKPVTAGDDEVEGNPRARSAKLRAARRVGGAEALA).

This sequence belongs to the methyltransferase superfamily. RsmH family.

It localises to the cytoplasm. The enzyme catalyses cytidine(1402) in 16S rRNA + S-adenosyl-L-methionine = N(4)-methylcytidine(1402) in 16S rRNA + S-adenosyl-L-homocysteine + H(+). Its function is as follows. Specifically methylates the N4 position of cytidine in position 1402 (C1402) of 16S rRNA. This chain is Ribosomal RNA small subunit methyltransferase H, found in Sorangium cellulosum (strain So ce56) (Polyangium cellulosum (strain So ce56)).